Reading from the N-terminus, the 341-residue chain is Mitochondrial glutathione transporter SLC25A40 (341 aa).

Solcar repeat units lie at residues 14–132 (ITPS…LRDI), 140–224 (RAEI…VKQS), and 234–328 (PTFA…GKSF). Transmembrane regions (helical) follow at residues 20 to 40 (MIASSMGALLTSFFVTPLDVV), 104 to 124 (LWSGLPPTLVMAVPATVIYFT), 143 to 163 (IASLVAGATARLWSATLISPL), 200 to 221 (WGPTVLRDVPFSALYWHNYELV), 236 to 256 (FAISFTAGAVSGSIAAIVTLP), and 299 to 319 (GLFAGLIPRLIKVAPACAIMI).

It belongs to the mitochondrial carrier (TC 2.A.29) family.

Its subcellular location is the mitochondrion inner membrane. It catalyses the reaction glutathione(in) = glutathione(out). Probable mitochondrial transporter required for glutathione import into mitochondria. Glutathione, which plays key roles in oxidative metabolism, is produced exclusively in the cytosol and is imported in many organelles. Mitochondrial glutathione is required for the activity and stability of proteins containing iron-sulfur clusters. The protein is Mitochondrial glutathione transporter SLC25A40 of Xenopus tropicalis (Western clawed frog).